Consider the following 466-residue polypeptide: L-seryl-tRNA(Sec) selenium transferase (466 aa).

N6-(pyridoxal phosphate)lysine is present on Lys-292.

It belongs to the SelA family. Requires pyridoxal 5'-phosphate as cofactor.

It is found in the cytoplasm. The enzyme catalyses L-seryl-tRNA(Sec) + selenophosphate + H(+) = L-selenocysteinyl-tRNA(Sec) + phosphate. The protein operates within aminoacyl-tRNA biosynthesis; selenocysteinyl-tRNA(Sec) biosynthesis; selenocysteinyl-tRNA(Sec) from L-seryl-tRNA(Sec) (bacterial route): step 1/1. Functionally, converts seryl-tRNA(Sec) to selenocysteinyl-tRNA(Sec) required for selenoprotein biosynthesis. The polypeptide is L-seryl-tRNA(Sec) selenium transferase (Rhizobium meliloti (strain 1021) (Ensifer meliloti)).